The chain runs to 192 residues: 7-methyl-GTP pyrophosphatase (192 aa).

Catalysis depends on aspartate 69, which acts as the Proton acceptor.

Belongs to the Maf family. YceF subfamily. It depends on a divalent metal cation as a cofactor.

Its subcellular location is the cytoplasm. It catalyses the reaction N(7)-methyl-GTP + H2O = N(7)-methyl-GMP + diphosphate + H(+). In terms of biological role, nucleoside triphosphate pyrophosphatase that hydrolyzes 7-methyl-GTP (m(7)GTP). May have a dual role in cell division arrest and in preventing the incorporation of modified nucleotides into cellular nucleic acids. The chain is 7-methyl-GTP pyrophosphatase from Methylobacillus flagellatus (strain ATCC 51484 / DSM 6875 / VKM B-1610 / KT).